The sequence spans 90 residues: Probable Fe(2+)-trafficking protein (90 aa).

The protein belongs to the Fe(2+)-trafficking protein family.

In terms of biological role, could be a mediator in iron transactions between iron acquisition and iron-requiring processes, such as synthesis and/or repair of Fe-S clusters in biosynthetic enzymes. The chain is Probable Fe(2+)-trafficking protein from Aliivibrio fischeri (strain ATCC 700601 / ES114) (Vibrio fischeri).